The sequence spans 233 residues: TATA-box-binding protein 1 (233 aa).

2 tandem repeats follow at residues Leu58–Val134 and Ile148–Leu225.

It belongs to the TBP family. In terms of assembly, belongs to the TFIID complex together with the TBP-associated factors (TAFs). Binds DNA as monomer.

The protein localises to the nucleus. In terms of biological role, general transcription factor that functions at the core of the DNA-binding multiprotein factor TFIID. Binding of TFIID to the TATA box is the initial transcriptional step of the pre-initiation complex (PIC), playing a role in the activation of eukaryotic genes transcribed by RNA polymerase II. The chain is TATA-box-binding protein 1 (TBP1) from Triticum aestivum (Wheat).